A 906-amino-acid polypeptide reads, in one-letter code: Cadherin-2 (906 aa).

The signal sequence occupies residues 1 to 25; the sequence is MCRIAGGPRTLLPLLAALLQASLEA. Residues 26 to 159 constitute a propeptide that is removed on maturation; that stretch reads SGELALCKTG…HSGALQRQKR (134 aa). Phosphoserine is present on Ser-96. Cadherin domains follow at residues 160-267, 268-382, 383-497, 498-603, and 604-717; these read DWVI…RPEF, LHQV…PPEF, TAMT…NPYF, APNP…DNAP, and QVLP…RIVG. At 160 to 724 the chain is on the extracellular side; that stretch reads DWVIPPINLP…IVGAGLGTGT (565 aa). Residue Glu-170 participates in Ca(2+) binding. An N-linked (GlcNAc...) asparagine glycan is attached at Asn-190. The Ca(2+) site is built by Asp-226, Glu-228, Asp-259, Met-260, Asn-261, Asp-262, and Asn-263. Asn-273 is a glycosylation site (N-linked (GlcNAc...) asparagine). The Ca(2+) site is built by Asp-293, Asp-295, and Asn-301. N-linked (GlcNAc...) asparagine glycosylation occurs at Asn-325. Asp-353 contacts Ca(2+). Asn-402, Asn-572, Asn-622, Asn-651, and Asn-692 each carry an N-linked (GlcNAc...) asparagine glycan. Residues 725–745 form a helical membrane-spanning segment; it reads IIAILLCIIILLILVLMFVVW. Residues 746 to 906 are Cytoplasmic-facing; sequence MKRRDKERQA…LADMYGGGDD (161 aa). Residues 863 to 880 are compositionally biased toward low complexity; sequence SGSTAGSLSSLNSSSSGG. Residues 863–883 are disordered; the sequence is SGSTAGSLSSLNSSSSGGDQD.

Homodimer (via extracellular region). Can also form heterodimers with other cadherins (via extracellular region). Dimerization occurs in trans, i.e. with a cadherin chain from another cell. Interacts with PCDH8; this complex may also include TAOK2. The interaction with PCDH8 may lead to internalization through TAOK2/p38 MAPK pathway. Identified in a complex containing FGFR4, NCAM1, CDH2, PLCG1, FRS2, SRC, SHC1, GAP43 and CTTN. May interact with OBSCN (via protein kinase domain 2). Interacts with FBXO45. In terms of processing, cleaved by MMP24. Ectodomain cleavage leads to the generation of a soluble 90 kDa N-terminal soluble fragment and a 45 kDa membrane-bound C-terminal fragment 1 (CTF1), which is further cleaved by gamma-secretase into a 35 kDa. Cleavage in neural stem cells by MMP24 affects CDH2-mediated anchorage of neural stem cells to ependymocytes in the adult subependymal zone, leading to modulate neural stem cell quiescence. May be phosphorylated by OBSCN. In testis, expressed in Sertoli and germ cells.

Its subcellular location is the cell membrane. It is found in the sarcolemma. The protein localises to the cell junction. It localises to the cell surface. The protein resides in the desmosome. Its subcellular location is the adherens junction. Calcium-dependent cell adhesion protein; preferentially mediates homotypic cell-cell adhesion by dimerization with a CDH2 chain from another cell. Cadherins may thus contribute to the sorting of heterogeneous cell types. Acts as a regulator of neural stem cells quiescence by mediating anchorage of neural stem cells to ependymocytes in the adult subependymal zone: upon cleavage by MMP24, CDH2-mediated anchorage is affected, leading to modulate neural stem cell quiescence. Plays a role in cell-to-cell junction formation between pancreatic beta cells and neural crest stem (NCS) cells, promoting the formation of processes by NCS cells. Required for proper neurite branching. Required for pre- and postsynaptic organization. CDH2 may be involved in neuronal recognition mechanism. In hippocampal neurons, may regulate dendritic spine density. The chain is Cadherin-2 (Cdh2) from Rattus norvegicus (Rat).